Here is a 438-residue protein sequence, read N- to C-terminus: Glutamate-1-semialdehyde 2,1-aminomutase (438 aa).

Lysine 278 is subject to N6-(pyridoxal phosphate)lysine.

The protein belongs to the class-III pyridoxal-phosphate-dependent aminotransferase family. HemL subfamily. In terms of assembly, homodimer. Pyridoxal 5'-phosphate serves as cofactor.

The protein resides in the cytoplasm. It carries out the reaction (S)-4-amino-5-oxopentanoate = 5-aminolevulinate. It functions in the pathway porphyrin-containing compound metabolism; protoporphyrin-IX biosynthesis; 5-aminolevulinate from L-glutamyl-tRNA(Glu): step 2/2. The protein is Glutamate-1-semialdehyde 2,1-aminomutase of Delftia acidovorans (strain DSM 14801 / SPH-1).